The chain runs to 60 residues: Large ribosomal subunit protein uL30 (60 aa).

The protein belongs to the universal ribosomal protein uL30 family. In terms of assembly, part of the 50S ribosomal subunit.

In Nocardioides sp. (strain ATCC BAA-499 / JS614), this protein is Large ribosomal subunit protein uL30.